Reading from the N-terminus, the 280-residue chain is Putative pyruvate, phosphate dikinase regulatory protein (280 aa).

Position 152–159 (152–159 (GISRTSKT)) interacts with ADP.

The protein belongs to the pyruvate, phosphate/water dikinase regulatory protein family. PDRP subfamily.

It catalyses the reaction N(tele)-phospho-L-histidyl/L-threonyl-[pyruvate, phosphate dikinase] + ADP = N(tele)-phospho-L-histidyl/O-phospho-L-threonyl-[pyruvate, phosphate dikinase] + AMP + H(+). The catalysed reaction is N(tele)-phospho-L-histidyl/O-phospho-L-threonyl-[pyruvate, phosphate dikinase] + phosphate + H(+) = N(tele)-phospho-L-histidyl/L-threonyl-[pyruvate, phosphate dikinase] + diphosphate. In terms of biological role, bifunctional serine/threonine kinase and phosphorylase involved in the regulation of the pyruvate, phosphate dikinase (PPDK) by catalyzing its phosphorylation/dephosphorylation. The protein is Putative pyruvate, phosphate dikinase regulatory protein of Clostridioides difficile (strain 630) (Peptoclostridium difficile).